A 208-amino-acid chain; its full sequence is N-(5'-phosphoribosyl)anthranilate isomerase (208 aa).

Belongs to the TrpF family.

It catalyses the reaction N-(5-phospho-beta-D-ribosyl)anthranilate = 1-(2-carboxyphenylamino)-1-deoxy-D-ribulose 5-phosphate. It functions in the pathway amino-acid biosynthesis; L-tryptophan biosynthesis; L-tryptophan from chorismate: step 3/5. The protein is N-(5'-phosphoribosyl)anthranilate isomerase of Methanococcus vannielii (strain ATCC 35089 / DSM 1224 / JCM 13029 / OCM 148 / SB).